The primary structure comprises 119 residues: Large ribosomal subunit protein bL20 (119 aa).

Belongs to the bacterial ribosomal protein bL20 family.

In terms of biological role, binds directly to 23S ribosomal RNA and is necessary for the in vitro assembly process of the 50S ribosomal subunit. It is not involved in the protein synthesizing functions of that subunit. In Bacillus velezensis (strain DSM 23117 / BGSC 10A6 / LMG 26770 / FZB42) (Bacillus amyloliquefaciens subsp. plantarum), this protein is Large ribosomal subunit protein bL20.